The sequence spans 328 residues: Putative P2Y purinoceptor 10 (328 aa).

Residues 1 to 27 (MGSNSTSSAESNCNATYLPFQYSLYAT) are Extracellular-facing. N-linked (GlcNAc...) asparagine glycosylation is found at asparagine 4 and asparagine 14. The chain crosses the membrane as a helical span at residues 28–48 (TYIFIFIPGLLANSAALWVLC). Residues 49–56 (RFISKKNK) are Cytoplasmic-facing. Residues 57–77 (AIIFMINLSVADLAHILSLPL) form a helical membrane-spanning segment. Residues 78 to 91 (RIYYYINRHWPFQR) lie on the Extracellular side of the membrane. A helical transmembrane segment spans residues 92-112 (ALCLLCFYLKYLNMYASIFFL). A disulfide bridge connects residues cysteine 94 and cysteine 170. The Cytoplasmic segment spans residues 113-137 (TCISLQRCLFLLKPFRARNWKRRYD). The chain crosses the membrane as a helical span at residues 138–158 (VGISAVIWIVVGTACLPFPIL). The Extracellular segment spans residues 159–182 (RNAGLANSTDSCFADLGYKQMDAV). The helical transmembrane segment at 183 to 203 (VLVTMVVIAELAGFVIPVITI) threads the bilayer. The Cytoplasmic segment spans residues 204–233 (ACCTWKTTVSLKHPPIAFQGISERKKALRM). The helical transmembrane segment at 234 to 254 (VFMCAAVFVICFTPYHINFIF) threads the bilayer. Residues 255-277 (YTMVKESIITSCPTVKSTLYFHP) are Extracellular-facing. The chain crosses the membrane as a helical span at residues 278-298 (FSLCLASLCCLLDPILYYFMA). At 299-328 (SEFRDQLSRHGSSVTRSRLMSRESGSSMVN) the chain is on the cytoplasmic side.

This sequence belongs to the G-protein coupled receptor 1 family.

It localises to the cell membrane. Its function is as follows. Putative receptor for purines coupled to G-proteins. The chain is Putative P2Y purinoceptor 10 (P2ry10) from Mus musculus (Mouse).